A 131-amino-acid polypeptide reads, in one-letter code: Small ribosomal subunit protein uS11 (131 aa).

Belongs to the universal ribosomal protein uS11 family. As to quaternary structure, part of the 30S ribosomal subunit. Interacts with proteins S7 and S18. Binds to IF-3.

Its function is as follows. Located on the platform of the 30S subunit, it bridges several disparate RNA helices of the 16S rRNA. Forms part of the Shine-Dalgarno cleft in the 70S ribosome. The sequence is that of Small ribosomal subunit protein uS11 from Neisseria gonorrhoeae (strain ATCC 700825 / FA 1090).